Consider the following 309-residue polypeptide: Taste receptor type 2 member 114 (309 aa).

The Extracellular portion of the chain corresponds to 1-7 (MLSTMEG). A helical membrane pass occupies residues 8 to 28 (VLLSVSTSEAVLGIVGNTFIA). At 29–43 (LVNCMDYNRNKKLSN) the chain is on the cytoplasmic side. The helical transmembrane segment at 44 to 64 (IGFILTGLAISRICLVLILIT) threads the bilayer. Residues 65–87 (EAYIKIFYPQLLSPVNIIELISY) are Extracellular-facing. A helical transmembrane segment spans residues 88–108 (LWIIICQLNVWFATSLSIFYF). The Cytoplasmic portion of the chain corresponds to 109–127 (LKIANFSHYIFVWLKRRID). The chain crosses the membrane as a helical span at residues 128 to 148 (LVFFFLIGCLLISWLFSFPVV). The Extracellular portion of the chain corresponds to 149–182 (AKMVKDNKMLYINTSWQIHMKKSELIINYVFTNG). N-linked (GlcNAc...) asparagine glycosylation is present at Asn-161. The chain crosses the membrane as a helical span at residues 183-203 (GVFLFFMIMLIVCFLLIISLW). The Cytoplasmic segment spans residues 204 to 233 (RHRRQMESNKLGFRDLNTEVHVRTIKVLLS). Residues 234–254 (FIILFILHFMGITINVICLLI) form a helical membrane-spanning segment. Residues 255–259 (PESNL) are Extracellular-facing. Residues 260-280 (LFMFGLTTAFIYPGCHSLILI) traverse the membrane as a helical segment. Residues 281–309 (LANSRLKQCSVMILQLLKCCENGKELRDT) lie on the Cytoplasmic side of the membrane.

This sequence belongs to the G-protein coupled receptor T2R family.

The protein resides in the membrane. Putative taste receptor which may play a role in the perception of bitterness. This chain is Taste receptor type 2 member 114, found in Mus musculus (Mouse).